The primary structure comprises 394 residues: 8-amino-7-oxononanoate synthase (394 aa).

Residue R18 coordinates substrate. Residue 105–106 participates in pyridoxal 5'-phosphate binding; sequence GY. H130 provides a ligand contact to substrate. Pyridoxal 5'-phosphate contacts are provided by S175, H203, and T232. At K235 the chain carries N6-(pyridoxal phosphate)lysine. T349 is a binding site for substrate.

Belongs to the class-II pyridoxal-phosphate-dependent aminotransferase family. BioF subfamily. As to quaternary structure, homodimer. Pyridoxal 5'-phosphate serves as cofactor.

The catalysed reaction is 6-carboxyhexanoyl-[ACP] + L-alanine + H(+) = (8S)-8-amino-7-oxononanoate + holo-[ACP] + CO2. Its pathway is cofactor biosynthesis; biotin biosynthesis. Functionally, catalyzes the decarboxylative condensation of pimeloyl-[acyl-carrier protein] and L-alanine to produce 8-amino-7-oxononanoate (AON), [acyl-carrier protein], and carbon dioxide. The chain is 8-amino-7-oxononanoate synthase from Marinobacter nauticus (strain ATCC 700491 / DSM 11845 / VT8) (Marinobacter aquaeolei).